We begin with the raw amino-acid sequence, 173 residues long: Alpha-crystallin A chain (173 aa).

At M1 the chain carries N-acetylmethionine. The tract at residues 1 to 63 (MDITIQHPWF…RTVLESGISE (63 aa)) is required for complex formation with BFSP1 and BFSP2. Deamidated glutamine; partial is present on Q6. S45 carries the phosphoserine modification. Q50 carries the deamidated glutamine; partial modification. The region spanning 52-164 (LFRTVLESGI…SDRSIPVSRE (113 aa)) is the sHSP domain. The residue at position 99 (K99) is an N6-acetyllysine. H100, E102, and H107 together coordinate Zn(2+). A Phosphoserine modification is found at S122. At N123 the chain carries Deamidated asparagine; partial. A disordered region spans residues 144 to 173 (PKIHSNMESSHSDRSIPVSREEKPTLAPSS). The span at 153-167 (SHSDRSIPVSREEKP) shows a compositional bias: basic and acidic residues. H154 provides a ligand contact to Zn(2+). Residue S162 is glycosylated (O-linked (GlcNAc) serine).

Belongs to the small heat shock protein (HSP20) family. Heteromer composed of three CRYAA and one CRYAB subunits. Inter-subunit bridging via zinc ions enhances stability, which is crucial as there is no protein turn over in the lens. Can also form homodimers and homotetramers (dimers of dimers) which serve as the building blocks of homooligomers. Within homooligomers, the zinc-binding motif is created from residues of 3 different molecules. His-100 and Glu-102 from one molecule are ligands of the zinc ion, and His-107 and His-154 residues from additional molecules complete the site with tetrahedral coordination geometry. Part of a complex required for lens intermediate filament formation composed of BFSP1, BFSP2 and CRYAA. Post-translationally, acetylation at Lys-99 may increase chaperone activity. In terms of processing, undergoes age-dependent proteolytical cleavage at the C-terminus.

It is found in the cytoplasm. The protein resides in the nucleus. Functionally, contributes to the transparency and refractive index of the lens. Acts as a chaperone, preventing aggregation of various proteins under a wide range of stress conditions. Required for the correct formation of lens intermediate filaments as part of a complex composed of BFSP1, BFSP2 and CRYAA. This chain is Alpha-crystallin A chain (CRYAA), found in Didelphis virginiana (North American opossum).